The primary structure comprises 259 residues: Insulin-like growth factor-binding protein 1 (259 aa).

The first 25 residues, 1–25, serve as a signal peptide directing secretion; that stretch reads MSEVPVARVWLVLLLLTVQVGVTAG. In terms of domain architecture, IGFBP N-terminal spans 26-107; that stretch reads APWQCAPCSA…TRGQGACVQE (82 aa). Intrachain disulfides connect Cys30/Cys57, Cys33/Cys59, Cys41/Cys60, Cys48/Cys63, Cys71/Cys84, and Cys78/Cys104. Ser45 carries the post-translational modification Phosphoserine; by FAM20C. Phosphoserine is present on residues Ser120, Ser123, Ser126, and Ser144. Ser156 is subject to Phosphoserine; by FAM20C. Position 157 is a phosphothreonine; by FAM20C (Thr157). Residue Tyr158 is modified to Phosphotyrosine. The Thyroglobulin type-1 domain occupies 173–251; sequence KEPCRIELYR…SPEIRGDPNC (79 aa). 3 cysteine pairs are disulfide-bonded: Cys176/Cys206, Cys217/Cys228, and Cys230/Cys251. Thr193 is modified (phosphothreonine; by FAM20C). 2 positions are modified to phosphoserine; by FAM20C: Ser194 and Ser199. Ser242 is subject to Phosphoserine; by FAM20C. Positions 246–248 match the Cell attachment site motif; the sequence is RGD.

Binds equally well IGF1 and IGF2. Interacts with integrin ITGA5:ITGB1. Interacts with VHL; this interaction inhibits HIF1A degradation. Post-translationally, phosphorylated; probably by casein kinase II. Phosphorylation alters the affinity of the protein for IGFs. In amniotic fluid, the unmodified protein is the most abundant form, while mono-, bi-, tri- and tetraphosphorylated forms are present in decreasing amounts. The phosphorylation state may influence the propensity to proteolysis.

The protein localises to the secreted. Its function is as follows. Multifunctional protein that plays a critical role in regulating the availability of IGFs such as IGF1 and IGF2 to their receptors and thereby regulates IGF-mediated cellular processes including cell migration, proliferation, differentiation or apoptosis in a cell-type specific manner. Also plays a positive role in cell migration by interacting with integrin ITGA5:ITGB1 through its RGD motif. Mechanistically, binding to integrins leads to activation of focal adhesion kinase/PTK2 and stimulation of the mitogen-activated protein kinase (MAPK) pathway. Regulates cardiomyocyte apoptosis by suppressing HIF-1alpha/HIF1A ubiquitination and subsequent degradation. In Homo sapiens (Human), this protein is Insulin-like growth factor-binding protein 1 (IGFBP1).